The following is a 228-amino-acid chain: 2,3-bisphosphoglycerate-dependent phosphoglycerate mutase (228 aa).

Substrate is bound by residues 8–15, 21–22, Arg60, 87–90, Lys98, 114–115, and 180–181; these read RHGQSQWN, TG, ERHY, RR, and GN. The Tele-phosphohistidine intermediate role is filled by His9. Glu87 acts as the Proton donor/acceptor in catalysis.

It belongs to the phosphoglycerate mutase family. BPG-dependent PGAM subfamily. As to quaternary structure, homodimer.

It carries out the reaction (2R)-2-phosphoglycerate = (2R)-3-phosphoglycerate. It functions in the pathway carbohydrate degradation; glycolysis; pyruvate from D-glyceraldehyde 3-phosphate: step 3/5. Catalyzes the interconversion of 2-phosphoglycerate and 3-phosphoglycerate. This is 2,3-bisphosphoglycerate-dependent phosphoglycerate mutase from Novosphingobium aromaticivorans (strain ATCC 700278 / DSM 12444 / CCUG 56034 / CIP 105152 / NBRC 16084 / F199).